The sequence spans 332 residues: Geranylgeranyl pyrophosphate synthase dpasD (332 aa).

3 residues coordinate isopentenyl diphosphate: Lys-55, Arg-58, and His-87. Asp-94 and Asp-98 together coordinate Mg(2+). Arg-103 is a binding site for dimethylallyl diphosphate. Residue Arg-104 participates in isopentenyl diphosphate binding. Residues Lys-181, Thr-182, and Gln-215 each contribute to the dimethylallyl diphosphate site. Mg(2+) is bound at residue Asp-218. 3 residues coordinate dimethylallyl diphosphate: Asn-222, Lys-232, and Lys-242.

It belongs to the FPP/GGPP synthase family. The cofactor is Mg(2+).

The enzyme catalyses isopentenyl diphosphate + dimethylallyl diphosphate = (2E)-geranyl diphosphate + diphosphate. It carries out the reaction isopentenyl diphosphate + (2E)-geranyl diphosphate = (2E,6E)-farnesyl diphosphate + diphosphate. It catalyses the reaction isopentenyl diphosphate + (2E,6E)-farnesyl diphosphate = (2E,6E,10E)-geranylgeranyl diphosphate + diphosphate. The protein operates within secondary metabolite biosynthesis; terpenoid biosynthesis. Its function is as follows. Geranylgeranyl pyrophosphate synthase; part of the gene cluster that mediates the biosynthesis of the diterpenoid pyrones subglutinols A and B. The first step of the pathway is the synthesis of the alpha-pyrone moiety by the polyketide synthase dpasA via condensation of one acetyl-CoA starter unit with 3 malonyl-CoA units and 2 methylations. The alpha-pyrone is then combined with geranylgeranyl pyrophosphate (GGPP) formed by the GGPP synthase dpasD through the action of the prenyltransferase dpasC to yield a linear alpha-pyrone diterpenoid. Subsequent steps in the diterpenoid pyrone biosynthetic pathway involve the decalin core formation, which is initiated by the epoxidation of the C10-C11 olefin by the FAD-dependent oxidoreductase dpasE, and is followed by a cyclization cascade catalyzed by the terpene cyclase dpasB. The FAD-linked oxidoreductase dpasF is then involved in tetrahydrofuran (THF) ring formation at the C5 unit to complete the formation of subglutinols A and B. DpasF also possesses an additional catalytic ability of multi-step oxidations to generate a new DDP analog with an enone system at the C5 named FDDP A. The polypeptide is Geranylgeranyl pyrophosphate synthase dpasD (Apiospora sacchari (Arthrinium sacchari)).